The chain runs to 199 residues: Phosphatidylethanolamine N-methyltransferase (199 aa).

Residues Met1–Glu12 are Lumenal-facing. The helical intramembrane region spans Pro13–Ala33. At Arg34 to Ala45 the chain is on the lumenal side. A helical transmembrane segment spans residues Phe46–Leu66. Residues Arg67–Gly93 lie on the Cytoplasmic side of the membrane. Residues Leu94–Thr114 traverse the membrane as a helical segment. Gly98–Gly100 provides a ligand contact to S-adenosyl-L-methionine. Over Gly115 to His157 the chain is Lumenal. The chain crosses the membrane as a helical span at residues Ala158–Leu178. Over Tyr179–Ser199 the chain is Cytoplasmic. Glu180–Glu181 contributes to the S-adenosyl-L-methionine binding site.

The protein belongs to the class VI-like SAM-binding methyltransferase superfamily. PEMT/PEM2 methyltransferase family. Expressed in liver (at protein level).

The protein localises to the endoplasmic reticulum membrane. It localises to the mitochondrion membrane. It catalyses the reaction a 1,2-diacyl-sn-glycero-3-phospho-N-methylethanolamine + S-adenosyl-L-methionine = a 1,2-diacyl-sn-glycero-3-phospho-N,N-dimethylethanolamine + S-adenosyl-L-homocysteine + H(+). The enzyme catalyses a 1,2-diacyl-sn-glycero-3-phospho-N,N-dimethylethanolamine + S-adenosyl-L-methionine = a 1,2-diacyl-sn-glycero-3-phosphocholine + S-adenosyl-L-homocysteine + H(+). It carries out the reaction a 1,2-diacyl-sn-glycero-3-phosphoethanolamine + S-adenosyl-L-methionine = a 1,2-diacyl-sn-glycero-3-phospho-N-methylethanolamine + S-adenosyl-L-homocysteine + H(+). The catalysed reaction is 1,2-di-(9Z-octadecenoyl)-sn-glycero-3-phosphoethanolamine + S-adenosyl-L-methionine = 1,2-di-(9Z-octadecenoyl)-sn-glycero-3-phospho-N-methylethanolamine + S-adenosyl-L-homocysteine + H(+). It catalyses the reaction 1,2-di-(9Z-octadecenoyl)-sn-glycero-3-phospho-N-methylethanolamine + S-adenosyl-L-methionine = 1,2-di-(9Z-octadecenoyl)-sn-glycero-3-phospho-N,N-dimethylethanolamine + S-adenosyl-L-homocysteine + H(+). The enzyme catalyses 1,2-di-(9Z-octadecenoyl)-sn-glycero-3-phospho-N,N-dimethylethanolamine + S-adenosyl-L-methionine = 1,2-di-(9Z-octadecenoyl)-sn-glycero-3-phosphocholine + S-adenosyl-L-homocysteine + H(+). It carries out the reaction 1,2-di-(9Z,12Z-octadecadienoyl)-sn-glycero-3-phosphoethanolamine + S-adenosyl-L-methionine = 1,2-di-(9Z,12Z-octadecadienoyl)-sn-glycero-3-phospho-N-methylethanolamine + S-adenosyl-L-homocysteine + H(+). The catalysed reaction is 1,2-di-(9Z,12Z-octadecadienoyl)-sn-glycero-3-phospho-N-methylethanolamine + S-adenosyl-L-methionine = 1,2-di-(9Z,12Z-octadecadienoyl)-sn-glycero-3-phospho-N,N-dimethylethanolamine + S-adenosyl-L-homocysteine + H(+). It catalyses the reaction 1,2-di-(9Z,12Z-octadecadienoyl)-sn-glycero-3-phospho-N,N-dimethylethanolamine + S-adenosyl-L-methionine = 1,2-di-(9Z,12Z-octadecadienoyl)-sn-glycero-3-phosphocholine + S-adenosyl-L-homocysteine + H(+). The enzyme catalyses 1,2-di-(9Z,12Z,15Z-octadecatrienoyl)-sn-glycero-3-phosphoethanolamine + S-adenosyl-L-methionine = 1,2-di-(9Z,12Z,15Z-octadecatrienoyl)-sn-glycero-3-phospho-N-methylethanolamine + S-adenosyl-L-homocysteine + H(+). It carries out the reaction 1,2-di-(9Z,12Z,15Z-octadecatrienoyl)-sn-glycero-3-phospho-N-methylethanolamine + S-adenosyl-L-methionine = 1,2-di-(9Z,12Z,15Z-octadecatrienoyl)-sn-glycero-3-phospho-N,N-dimethylethanolamine + S-adenosyl-L-homocysteine + H(+). The catalysed reaction is 1,2-di-(9Z,12Z,15Z-octadecatrienoyl)-sn-glycero-3-phospho-N,N-dimethylethanolamine + S-adenosyl-L-methionine = 1,2-di-(9Z,12Z,15Z-octadecatrienoyl)-sn-glycero-3-phosphocholine + S-adenosyl-L-homocysteine + H(+). It catalyses the reaction 1-hexadecanoyl-2-(4Z,7Z,10Z,13Z,16Z,19Z-docosahexaenoyl)-sn-glycero-3-phosphoethanolamine + S-adenosyl-L-methionine = 1-hexadecanoyl-2-(4Z,7Z,10Z,13Z,16Z,19Z-docosahexaenoyl)-sn-glycero-3-phospho-N-methylethanolamine + S-adenosyl-L-homocysteine + H(+). The enzyme catalyses 1-hexadecanoyl-2-(4Z,7Z,10Z,13Z,16Z,19Z-docosahexaenoyl)-sn-glycero-3-phospho-N-methylethanolamine + S-adenosyl-L-methionine = 1-hexadecanoyl-2-(4Z,7Z,10Z,13Z,16Z,19Z-docosahexaenoyl)-sn-glycero-3-phospho-N,N-dimethylethanolamine + S-adenosyl-L-homocysteine + H(+). It carries out the reaction 1-hexadecanoyl-2-(4Z,7Z,10Z,13Z,16Z,19Z-docosahexaenoyl)-sn-glycero-3-phospho-N,N-dimethylethanolamine + S-adenosyl-L-methionine = 1-hexadecanoyl-2-(4Z,7Z,10Z,13Z,16Z,19Z-docosahexaenoyl)-sn-glycero-3-phosphocholine + S-adenosyl-L-homocysteine + H(+). The protein operates within phospholipid metabolism; phosphatidylcholine biosynthesis. Catalyzes the three sequential steps of the methylation pathway for the biosynthesis of phosphatidylcholine, a critical and essential component for membrane structure. Uses S-adenosylmethionine (S-adenosyl-L-methionine, SAM or AdoMet) as the methyl group donor for the methylation of phosphatidylethanolamine (1,2-diacyl-sn-glycero-3-phosphoethanolamine, PE) to phosphatidylmonomethylethanolamine (1,2-diacyl-sn-glycero-3-phospho-N-methylethanolamine, PMME), PMME to phosphatidyldimethylethanolamine (1,2-diacyl-sn-glycero-3-phospho-N,N-dimethylethanolamine, PDME), and PDME to phosphatidylcholine (1,2-diacyl-sn-glycero-3-phosphocholine, PC), producing S-adenosyl-L-homocysteine in each step. The polypeptide is Phosphatidylethanolamine N-methyltransferase (Mus musculus (Mouse)).